Here is a 282-residue protein sequence, read N- to C-terminus: B3 domain-containing protein At5g25475 (282 aa).

Positions 20 to 114 (WKSLSPGQTW…NLEVQIFKNN (95 aa)) form a DNA-binding region, TF-B3. The segment at 127-178 (PETEPFHPTPKKPHKETTPASSFASGSGCSANGGTNGRGKQRSSDVKNPERY) is disordered. Low complexity predominate over residues 144–159 (TPASSFASGSGCSANG).

It is found in the nucleus. The sequence is that of B3 domain-containing protein At5g25475 from Arabidopsis thaliana (Mouse-ear cress).